Here is a 291-residue protein sequence, read N- to C-terminus: T-cell leukemia homeobox protein 3 (291 aa).

The interval 1–51 (MEAPASAQTPHPHEPISFGIDQILNSPDQDSAPAPRGPDGASYLGGPPGGR) is disordered. The segment at residues 166-225 (RKKPRTSFSRVQICELEKRFHRQKYLASAERAALAKSLKMTDAQVKTWFQNRRTKWRRQT) is a DNA-binding region (homeobox).

It localises to the nucleus. In Mus musculus (Mouse), this protein is T-cell leukemia homeobox protein 3 (Tlx3).